A 336-amino-acid polypeptide reads, in one-letter code: Lipoyl synthase (336 aa).

Residues Cys81, Cys86, Cys92, Cys107, Cys111, Cys114, and Ser323 each coordinate [4Fe-4S] cluster. Residues 93 to 312 (FGHGTATFMI…EDYGYELGFS (220 aa)) form the Radical SAM core domain.

The protein belongs to the radical SAM superfamily. Lipoyl synthase family. Requires [4Fe-4S] cluster as cofactor.

The protein localises to the cytoplasm. The enzyme catalyses [[Fe-S] cluster scaffold protein carrying a second [4Fe-4S](2+) cluster] + N(6)-octanoyl-L-lysyl-[protein] + 2 oxidized [2Fe-2S]-[ferredoxin] + 2 S-adenosyl-L-methionine + 4 H(+) = [[Fe-S] cluster scaffold protein] + N(6)-[(R)-dihydrolipoyl]-L-lysyl-[protein] + 4 Fe(3+) + 2 hydrogen sulfide + 2 5'-deoxyadenosine + 2 L-methionine + 2 reduced [2Fe-2S]-[ferredoxin]. It participates in protein modification; protein lipoylation via endogenous pathway; protein N(6)-(lipoyl)lysine from octanoyl-[acyl-carrier-protein]: step 2/2. In terms of biological role, catalyzes the radical-mediated insertion of two sulfur atoms into the C-6 and C-8 positions of the octanoyl moiety bound to the lipoyl domains of lipoate-dependent enzymes, thereby converting the octanoylated domains into lipoylated derivatives. This is Lipoyl synthase from Stenotrophomonas maltophilia (strain R551-3).